Consider the following 157-residue polypeptide: Protein FAM162B (157 aa).

Residues A104 to A123 traverse the membrane as a helical segment.

Belongs to the UPF0389 family.

The protein localises to the membrane. The sequence is that of Protein FAM162B (Fam162b) from Mus musculus (Mouse).